The chain runs to 243 residues: Tyrosine recombinase XerD-like (243 aa).

The region spanning 1–72 is the Core-binding (CB) domain; the sequence is MKEYIRPFLN…AVNQFLYFLY (72 aa). Residues 85–243 form the Tyr recombinase domain; the sequence is LPKVSVSKEQ…KTMITLEKYR (159 aa). Active-site residues include lysine 149 and arginine 210. Catalysis depends on tyrosine 242, which acts as the O-(3'-phospho-DNA)-tyrosine intermediate.

Belongs to the 'phage' integrase family. XerD-like subfamily.

Its subcellular location is the cytoplasm. In terms of biological role, putative tyrosine recombinase. Not involved in the cutting and rejoining of the recombining DNA molecules on dif(SL) site. The sequence is that of Tyrosine recombinase XerD-like from Streptococcus sanguinis (strain SK36).